Here is a 398-residue protein sequence, read N- to C-terminus: Argininosuccinate synthase (398 aa).

8-16 (AYSGGLDTS) lines the ATP pocket. Y87 is an L-citrulline binding site. G117 serves as a coordination point for ATP. The L-aspartate site is built by T119, N123, and D124. N123 serves as a coordination point for L-citrulline. L-citrulline contacts are provided by R127, S175, E259, and Y271.

The protein belongs to the argininosuccinate synthase family. Type 1 subfamily. Homotetramer.

The protein localises to the cytoplasm. The enzyme catalyses L-citrulline + L-aspartate + ATP = 2-(N(omega)-L-arginino)succinate + AMP + diphosphate + H(+). It functions in the pathway amino-acid biosynthesis; L-arginine biosynthesis; L-arginine from L-ornithine and carbamoyl phosphate: step 2/3. The polypeptide is Argininosuccinate synthase (Corynebacterium kroppenstedtii (strain DSM 44385 / JCM 11950 / CIP 105744 / CCUG 35717)).